The sequence spans 292 residues: ATP synthase gamma chain (292 aa).

The protein belongs to the ATPase gamma chain family. In terms of assembly, F-type ATPases have 2 components, CF(1) - the catalytic core - and CF(0) - the membrane proton channel. CF(1) has five subunits: alpha(3), beta(3), gamma(1), delta(1), epsilon(1). CF(0) has three main subunits: a, b and c.

The protein localises to the cell inner membrane. Functionally, produces ATP from ADP in the presence of a proton gradient across the membrane. The gamma chain is believed to be important in regulating ATPase activity and the flow of protons through the CF(0) complex. This is ATP synthase gamma chain from Methylobacterium nodulans (strain LMG 21967 / CNCM I-2342 / ORS 2060).